Here is a 541-residue protein sequence, read N- to C-terminus: MAKQIKYGEEARRALERGVNAVADTVKVTLGPRGRNVVLDKKYGSPTVTNDGVTIAREIELEDPFENQGAQLLKEAATKTNDIAGDGTTTATLLAQAMVREGLKNLAAGANPMLLRRGIAKAVDAAVEGLKRISKPIDNKESIAHVASISAADEEIGKLIAEAMDKVGKDGVITVEESKTLGTTLEVVEGMQFDRGYISPYMVTDAEKMEAVLEEPVILITDKKISNIQDLLPLLEQIVQQGKKLLIIADDVEGEALATLIVNKLRGTFTCVAVKAPGFGDRRKEMLQDIAILTGGQVISEELGYDLKDVRLDMLGRARQVKVTKEYTTIVGGAGDPSEIKKRVNQIKAQIEETTSDYDREKLQERLAKLAGGVAVIQAGAATETELKEKKHRIEDALAATKAAVEEGIVPGGGIALLNVIEDVQKVVDSLEGDFKTGAKIVLRALEEPVRQIATNAGVDGSVIVEKIKAAKDPNFGYDAYKEEFTDMFKAGIVDPTKVTRTALQNAASIASMILTTEAIVVDIPEKNTGMPNPGAGMDMM.

ATP is bound by residues 29 to 32 (TLGP), 86 to 90 (DGTTT), G413, and D495.

As to quaternary structure, forms a cylinder of 14 subunits composed of two heptameric rings stacked back-to-back. Interacts with the co-chaperonin GroES.

It localises to the cytoplasm. It carries out the reaction ATP + H2O + a folded polypeptide = ADP + phosphate + an unfolded polypeptide.. Its function is as follows. Together with its co-chaperonin GroES, plays an essential role in assisting protein folding. The GroEL-GroES system forms a nano-cage that allows encapsulation of the non-native substrate proteins and provides a physical environment optimized to promote and accelerate protein folding. The protein is Chaperonin GroEL of Thermoanaerobacter brockii (Thermoanaerobium brockii).